The chain runs to 207 residues: Large ribosomal subunit protein uL4 (207 aa).

Residues 48-75 (THSVKNRSAVRGGGRKPWRQKGTGRARQ) are disordered. The span at 60-71 (GGRKPWRQKGTG) shows a compositional bias: basic residues.

It belongs to the universal ribosomal protein uL4 family. In terms of assembly, part of the 50S ribosomal subunit.

Its function is as follows. One of the primary rRNA binding proteins, this protein initially binds near the 5'-end of the 23S rRNA. It is important during the early stages of 50S assembly. It makes multiple contacts with different domains of the 23S rRNA in the assembled 50S subunit and ribosome. Functionally, forms part of the polypeptide exit tunnel. The protein is Large ribosomal subunit protein uL4 of Staphylococcus carnosus (strain TM300).